The chain runs to 405 residues: MRGRRGDRMTINIQEHMAINVCPGPIRPIRQISDYFPRRGPGPEGGGGGGGTGCGEAPAHLAPLALAPPAALLGATTPDDGAEVDSYDSDDTTALGTLEFDLLYDQASCMLHCRILRAKGLKPMDFNGLADPYVKLHLLPGACKANKLKTKTQRNTLNPVWNEELTYSGITDDDITHKVLRISVCDEDKLSHNEFIGEIRVPLRRLKPSQKKHFNICLERQVPLPSPSSMSAALRGISCYLKELEQAEQGPGLLEERGRILLSLSYSSRRHGLLVGIVRCAHLAAMDVNGYSDPYVKTYLRPDVDKKSKHKTCVKKKTLNPEFNEEFFYEIELSTLATKTLEVTVWDYDIGKSNDFIGGVSLGPGARGEAQKHWNDCLHQPDTALERWHTLTSELPPAAGAYPLA.

The interval 1 to 94 (MRGRRGDRMT…DSYDSDDTTA (94 aa)) is interaction with UNC13D and DYNLT1. A disordered region spans residues 34-54 (DYFPRRGPGPEGGGGGGGTGC). Residues 42-54 (GPEGGGGGGGTGC) show a composition bias toward gly residues. C2 domains are found at residues 94 to 216 (ALGT…HFNI) and 256 to 389 (ERGR…ERWH). Positions 125, 131, 186, 188, 287, 293, 347, 349, and 355 each coordinate Ca(2+). Residues 220–405 (RQVPLPSPSS…PPAAGAYPLA (186 aa)) form an interaction with UNC13D region.

Interacts (via N-terminus) with UNC13A. Interacts with cytoplasmic dynein light chain DYNLT1. Interacts with UNC13D. It depends on Ca(2+) as a cofactor. As to expression, brain and mast cells.

The protein localises to the cytoplasmic vesicle. It localises to the secretory vesicle. Its subcellular location is the synaptic vesicle membrane. The protein resides in the synapse. It is found in the synaptosome. The protein localises to the lysosome. In terms of biological role, calcium sensor which most probably regulates fusion of vesicles with membranes. Binds calcium and phospholipids. May be involved in calcium dependent neurotransmitter release through the interaction with UNC13A. May be involved in calcium-dependent spontaneous release of neurotransmitter in absence of action potentials in neuronal cells. Regulates Ca(2+)-dependent secretory lysosome exocytosis in mast cells. The polypeptide is Double C2-like domain-containing protein alpha (Doc2a) (Mus musculus (Mouse)).